Reading from the N-terminus, the 239-residue chain is Ribonuclease PH (239 aa).

Residues R87 and 125 to 127 (GTR) contribute to the phosphate site.

It belongs to the RNase PH family. In terms of assembly, homohexameric ring arranged as a trimer of dimers.

It carries out the reaction tRNA(n+1) + phosphate = tRNA(n) + a ribonucleoside 5'-diphosphate. Functionally, phosphorolytic 3'-5' exoribonuclease that plays an important role in tRNA 3'-end maturation. Removes nucleotide residues following the 3'-CCA terminus of tRNAs; can also add nucleotides to the ends of RNA molecules by using nucleoside diphosphates as substrates, but this may not be physiologically important. Probably plays a role in initiation of 16S rRNA degradation (leading to ribosome degradation) during starvation. This Acaryochloris marina (strain MBIC 11017) protein is Ribonuclease PH.